A 171-amino-acid chain; its full sequence is 3-hydroxydecanoyl-[acyl-carrier-protein] dehydratase (171 aa).

His-70 is an active-site residue.

This sequence belongs to the thioester dehydratase family. FabA subfamily. In terms of assembly, homodimer.

The protein localises to the cytoplasm. The enzyme catalyses a (3R)-hydroxyacyl-[ACP] = a (2E)-enoyl-[ACP] + H2O. It catalyses the reaction (3R)-hydroxydecanoyl-[ACP] = (2E)-decenoyl-[ACP] + H2O. The catalysed reaction is (2E)-decenoyl-[ACP] = (3Z)-decenoyl-[ACP]. Its pathway is lipid metabolism; fatty acid biosynthesis. Necessary for the introduction of cis unsaturation into fatty acids. Catalyzes the dehydration of (3R)-3-hydroxydecanoyl-ACP to E-(2)-decenoyl-ACP and then its isomerization to Z-(3)-decenoyl-ACP. Can catalyze the dehydratase reaction for beta-hydroxyacyl-ACPs with saturated chain lengths up to 16:0, being most active on intermediate chain length. The protein is 3-hydroxydecanoyl-[acyl-carrier-protein] dehydratase of Pseudomonas fluorescens (strain SBW25).